Here is a 430-residue protein sequence, read N- to C-terminus: Histidine--tRNA ligase (430 aa).

This sequence belongs to the class-II aminoacyl-tRNA synthetase family. In terms of assembly, homodimer.

It localises to the cytoplasm. The enzyme catalyses tRNA(His) + L-histidine + ATP = L-histidyl-tRNA(His) + AMP + diphosphate + H(+). The chain is Histidine--tRNA ligase from Acaryochloris marina (strain MBIC 11017).